Consider the following 1553-residue polypeptide: Sterol 3-beta-glucosyltransferase (1553 aa).

2 stretches are compositionally biased toward polar residues: residues 1 to 10 (MASSQPTSSG) and 25 to 36 (LNTETSSSQHRA). 2 disordered regions span residues 1 to 106 (MASS…NEED) and 189 to 270 (PASA…GLAP). The segment covering 90–100 (LPDRLKDNGKE) has biased composition (basic and acidic residues). Over residues 211–222 (LLQSVPSLSRLS) the composition is skewed to low complexity. The span at 223–232 (SSHKSKKTKQ) shows a compositional bias: basic residues. GRAM domains are found at residues 323 to 370 (KKLK…HLPK) and 464 to 495 (SLQRVIFRSHNDGDSVKISIPIRNILDIEEAQ). Residues 374 to 470 (EIAKSGYLSK…WVKSLQRVIF (97 aa)) form the PH domain. Disordered stretches follow at residues 542–569 (SPEDSGANDAPKGTGGDRAIGDNLGSPR), 611–662 (FSRR…FDDP), and 805–825 (GKKHYDHPAGRRTEREDVEDD). Positions 633–650 (LHGDGRRSFSKPRHEPHA) are enriched in basic and acidic residues. A compositionally biased stretch (polar residues) spans 651–662 (STDSYAQSFDDP). Positions 810–819 (DHPAGRRTER) are enriched in basic and acidic residues. In terms of domain architecture, GRAM 3 spans 834-900 (ARFQAHFALP…KDIETVDKEK (67 aa)). The UDP-alpha-D-glucose site is built by Ser-1020, Arg-1021, Asp-1023, Ala-1328, His-1330, His-1343, Ser-1346, Gly-1347, Thr-1348, Asp-1367, and Gln-1368. 2 disordered regions span residues 1446–1504 (KHQS…GSMS) and 1527–1553 (PALGSRVLSSPPTSPGAMRGAGGVKYV). Residues 1466-1488 (PEDDQGQAAEEDDIDADDEEEES) show a composition bias toward acidic residues.

The protein belongs to the glycosyltransferase 28 family.

It is found in the cytoplasm. Its subcellular location is the preautophagosomal structure membrane. The enzyme catalyses a sterol + UDP-alpha-D-glucose = a sterol 3-beta-D-glucoside + UDP + H(+). It carries out the reaction ergosterol + UDP-alpha-D-glucose = ergosteryl 3-beta-D-glucoside + UDP + H(+). In terms of biological role, sterol glycosyltransferase responsible for the glycosylation of ergosterol to form ergosterol-glucoside. The polypeptide is Sterol 3-beta-glucosyltransferase (apg-12) (Neurospora crassa (strain ATCC 24698 / 74-OR23-1A / CBS 708.71 / DSM 1257 / FGSC 987)).